The chain runs to 239 residues: Small ribosomal subunit protein uS3 (239 aa).

The 69-residue stretch at 39–107 (VRQVLRKKMS…SVHINVIEVR (69 aa)) folds into the KH type-2 domain. The tract at residues 214–239 (GQEKQDDGSRGDRNADRSSRRSREVR) is disordered. The segment covering 216-239 (EKQDDGSRGDRNADRSSRRSREVR) has biased composition (basic and acidic residues).

This sequence belongs to the universal ribosomal protein uS3 family. In terms of assembly, part of the 30S ribosomal subunit. Forms a tight complex with proteins S10 and S14.

Binds the lower part of the 30S subunit head. Binds mRNA in the 70S ribosome, positioning it for translation. This Xylella fastidiosa (strain M12) protein is Small ribosomal subunit protein uS3.